A 71-amino-acid chain; its full sequence is Heat-stable enterotoxin B (71 aa).

An N-terminal signal peptide occupies residues 1-19 (MKKIILALVLMLFSFCTLG). Positions 20–52 (QETASMHLDDTLSAPIAAEINRKACDTQTPSPS) are excised as a propeptide. Disulfide bonds link cysteine 59–cysteine 64, cysteine 60–cysteine 68, and cysteine 63–cysteine 71.

This sequence belongs to the heat-stable enterotoxin family.

The protein resides in the secreted. Toxin which activates the particulate form of guanylate cyclase and increases cyclic GMP levels within the host intestinal epithelial cells. Could play an important role in pathogenesis. The chain is Heat-stable enterotoxin B (ystB) from Yersinia enterocolitica.